The chain runs to 31 residues: Cliotide T10 (31 aa).

The segment at residues 1–31 (GIPCGESCVYIPCTVTALLGCSCKDKVCYKN) is a cross-link (cyclopeptide (Gly-Asn)). 3 disulfides stabilise this stretch: Cys4–Cys21, Cys8–Cys23, and Cys13–Cys28.

Contains 3 disulfide bonds. In terms of processing, this is a cyclic peptide. In terms of tissue distribution, expressed in seed, root and nodule but not in flower, stem, shoot, leaf and pod (at protein level).

Its function is as follows. Probably participates in a plant defense mechanism. The polypeptide is Cliotide T10 (Clitoria ternatea (Butterfly pea)).